We begin with the raw amino-acid sequence, 114 residues long: T cell receptor beta variable 6-2 (114 aa).

A signal peptide spans 1–21 (MSLGLLCCGAFSLLWAGPVNA). In terms of domain architecture, Ig-like spans 22-114 (GVTQTPKFRV…TSVYFCASSY (93 aa)). A disulfide bridge links Cys42 with Cys110. Residue Asn84 is glycosylated (N-linked (GlcNAc...) asparagine).

In terms of assembly, alpha-beta TR is a heterodimer composed of an alpha and beta chain; disulfide-linked. The alpha-beta TR is associated with the transmembrane signaling CD3 coreceptor proteins to form the TR-CD3 (TcR or TCR). The assembly of alpha-beta TR heterodimers with CD3 occurs in the endoplasmic reticulum where a single alpha-beta TR heterodimer associates with one CD3D-CD3E heterodimer, one CD3G-CD3E heterodimer and one CD247 homodimer forming a stable octameric structure. CD3D-CD3E and CD3G-CD3E heterodimers preferentially associate with TR alpha and TR beta chains, respectively. The association of the CD247 homodimer is the last step of TcR assembly in the endoplasmic reticulum and is required for transport to the cell surface.

The protein resides in the cell membrane. V region of the variable domain of T cell receptor (TR) beta chain that participates in the antigen recognition. Alpha-beta T cell receptors are antigen specific receptors which are essential to the immune response and are present on the cell surface of T lymphocytes. Recognize peptide-major histocompatibility (MH) (pMH) complexes that are displayed by antigen presenting cells (APC), a prerequisite for efficient T cell adaptive immunity against pathogens. Binding of alpha-beta TR to pMH complex initiates TR-CD3 clustering on the cell surface and intracellular activation of LCK that phosphorylates the ITAM motifs of CD3G, CD3D, CD3E and CD247 enabling the recruitment of ZAP70. In turn ZAP70 phosphorylates LAT, which recruits numerous signaling molecules to form the LAT signalosome. The LAT signalosome propagates signal branching to three major signaling pathways, the calcium, the mitogen-activated protein kinase (MAPK) kinase and the nuclear factor NF-kappa-B (NF-kB) pathways, leading to the mobilization of transcription factors that are critical for gene expression and essential for T cell growth and differentiation. The T cell repertoire is generated in the thymus, by V-(D)-J rearrangement. This repertoire is then shaped by intrathymic selection events to generate a peripheral T cell pool of self-MH restricted, non-autoaggressive T cells. Post-thymic interaction of alpha-beta TR with the pMH complexes shapes TR structural and functional avidity. The sequence is that of T cell receptor beta variable 6-2 from Homo sapiens (Human).